Reading from the N-terminus, the 394-residue chain is Acetate kinase (394 aa).

N7 lines the Mg(2+) pocket. ATP is bound at residue K14. Residue R88 participates in substrate binding. Residue D145 is the Proton donor/acceptor of the active site. ATP is bound by residues H205–G209, D279–R281, and G327–N331. E379 lines the Mg(2+) pocket.

It belongs to the acetokinase family. In terms of assembly, homodimer. Mg(2+) serves as cofactor. The cofactor is Mn(2+).

It localises to the cytoplasm. It carries out the reaction acetate + ATP = acetyl phosphate + ADP. It functions in the pathway metabolic intermediate biosynthesis; acetyl-CoA biosynthesis; acetyl-CoA from acetate: step 1/2. In terms of biological role, catalyzes the formation of acetyl phosphate from acetate and ATP. Can also catalyze the reverse reaction. The chain is Acetate kinase from Campylobacter lari (strain RM2100 / D67 / ATCC BAA-1060).